We begin with the raw amino-acid sequence, 450 residues long: Bifunctional protein GlmU (450 aa).

The segment at 1–229 (MRRHAIILAA…VEEIMGVNDR (229 aa)) is pyrophosphorylase. UDP-N-acetyl-alpha-D-glucosamine-binding positions include 8–11 (LAAG), Lys-22, Gln-72, and 77–78 (GT). Asp-102 is a Mg(2+) binding site. UDP-N-acetyl-alpha-D-glucosamine-binding residues include Gly-139, Glu-154, and Asn-227. Residue Asn-227 coordinates Mg(2+). A linker region spans residues 230–250 (VMLSQAENAMQRRTNHYHMLN). The interval 251-450 (GVTIIDPDST…RQTTKEGYRK (200 aa)) is N-acetyltransferase. UDP-N-acetyl-alpha-D-glucosamine is bound by residues Arg-332 and Lys-350. The active-site Proton acceptor is the His-362. The UDP-N-acetyl-alpha-D-glucosamine site is built by Tyr-365 and Asn-376. Residues 385-386 (NY), Ala-422, and Arg-439 each bind acetyl-CoA.

In the N-terminal section; belongs to the N-acetylglucosamine-1-phosphate uridyltransferase family. It in the C-terminal section; belongs to the transferase hexapeptide repeat family. Homotrimer. Requires Mg(2+) as cofactor.

It localises to the cytoplasm. The catalysed reaction is alpha-D-glucosamine 1-phosphate + acetyl-CoA = N-acetyl-alpha-D-glucosamine 1-phosphate + CoA + H(+). It catalyses the reaction N-acetyl-alpha-D-glucosamine 1-phosphate + UTP + H(+) = UDP-N-acetyl-alpha-D-glucosamine + diphosphate. It participates in nucleotide-sugar biosynthesis; UDP-N-acetyl-alpha-D-glucosamine biosynthesis; N-acetyl-alpha-D-glucosamine 1-phosphate from alpha-D-glucosamine 6-phosphate (route II): step 2/2. It functions in the pathway nucleotide-sugar biosynthesis; UDP-N-acetyl-alpha-D-glucosamine biosynthesis; UDP-N-acetyl-alpha-D-glucosamine from N-acetyl-alpha-D-glucosamine 1-phosphate: step 1/1. The protein operates within bacterial outer membrane biogenesis; LPS lipid A biosynthesis. In terms of biological role, catalyzes the last two sequential reactions in the de novo biosynthetic pathway for UDP-N-acetylglucosamine (UDP-GlcNAc). The C-terminal domain catalyzes the transfer of acetyl group from acetyl coenzyme A to glucosamine-1-phosphate (GlcN-1-P) to produce N-acetylglucosamine-1-phosphate (GlcNAc-1-P), which is converted into UDP-GlcNAc by the transfer of uridine 5-monophosphate (from uridine 5-triphosphate), a reaction catalyzed by the N-terminal domain. This chain is Bifunctional protein GlmU, found in Staphylococcus aureus (strain MRSA252).